The primary structure comprises 258 residues: UBX domain-containing protein 2A (258 aa).

Residues 1-14 (MKEVDNLDSIKEEW) show a composition bias toward basic and acidic residues. A disordered region spans residues 1 to 30 (MKEVDNLDSIKEEWACETGPPDSQPLNDNQ). Residues 1–152 (MKEVDNLDSI…SATPRIVSKA (152 aa)) form a required for interaction with CHRNA3 region. The tract at residues 1–165 (MKEVDNLDSI…EVDNKSTLSA (165 aa)) is required for inhibition of CHRNA3 ubiquitination and translocation of CHRNA3 to the plasma membrane resulting in an increase in acetylcholine-gated nicotinic acetylcholine receptor currents. An SEP domain is found at 61–125 (QVDVNIKLWK…VEDKKNEVCM (65 aa)). Positions 168–258 (LNNLEPITRI…QKTAEPFRKL (91 aa)) are required for interaction with VCP. The UBX domain occupies 170–247 (NLEPITRIQI…DLKNAVIIQR (78 aa)).

In terms of assembly, part of a complex composed of STUB1/CHIP, VCP/p97, CHRNA3, and UBXN2A that modulates the ubiquitination and endoplasmic reticulum-associated degradation (ERAD) of CHRNA3. Within the complex UBXN2A acts as a scaffold protein required for the interaction of CHRNA3 with VCP/p97, this interaction also inhibits CHRNA3 ubiquitination by STUB1/CHIP and subsequently ERAD. Interacts (via SEP domain) with CHRNA3 and interacts (via UBX domain) with VCP/P97; these interactions are required for the interaction of CHRNA3 with the STUB1-VCP-UBXN2A complex. Interacts with HSPA9/MOT-2 (via SBD domain); the interaction inhibits HSPA9/MOT-2 interaction with and degradation of p53, thereby promotes p53 translocation to the nucleus. Interacts with RICTOR. Post-translationally, ubiquitinated. As to expression, expressed in the prefrontal cortex (at protein level). Expressed in the habenula and hippocampus (at protein level). Expressed in peripheral ganglia.

Its subcellular location is the golgi apparatus. The protein resides in the endoplasmic reticulum. The protein localises to the perikaryon. It is found in the cell projection. It localises to the dendrite. Its subcellular location is the nucleus. The protein resides in the cytoplasm. Functionally, acts to repress the ubiquitination and subsequent endoplasmic reticulum-associated degradation of CHRNA3 by the STUB1-VCP-UBXN2A complex in cortical neurons. Also acts to promote the translocation of CHRNA3 to the plasma membrane and subsequently increases plasma membrane acetylcholine-gated ion-channel activation. Plays a role in the inhibition of STUB1-mediated TP53 degradation, via its interaction with HSPA9 which acts to inhibit TP53 binding to HSPA9. Positively mediates the ubiquitination and proteosomal degradation of RICTOR, may thereby act as a negative regulator of the mTORC2 pathway. The protein is UBX domain-containing protein 2A of Mus musculus (Mouse).